We begin with the raw amino-acid sequence, 330 residues long: Aspartate--ammonia ligase (330 aa).

The protein belongs to the class-II aminoacyl-tRNA synthetase family. AsnA subfamily.

The protein resides in the cytoplasm. The catalysed reaction is L-aspartate + NH4(+) + ATP = L-asparagine + AMP + diphosphate + H(+). It functions in the pathway amino-acid biosynthesis; L-asparagine biosynthesis; L-asparagine from L-aspartate (ammonia route): step 1/1. This is Aspartate--ammonia ligase from Edwardsiella ictaluri (strain 93-146).